A 164-amino-acid polypeptide reads, in one-letter code: Phosphopantetheine adenylyltransferase (164 aa).

S9 provides a ligand contact to substrate. Residues 9–10 and H17 each bind ATP; that span reads SF. Residues K41, A78, and R92 each coordinate substrate. Residues 93–95, E103, and 128–134 contribute to the ATP site; these read GLR and SRPITAT.

Belongs to the bacterial CoaD family. Homohexamer. The cofactor is Mg(2+).

It is found in the cytoplasm. It catalyses the reaction (R)-4'-phosphopantetheine + ATP + H(+) = 3'-dephospho-CoA + diphosphate. It participates in cofactor biosynthesis; coenzyme A biosynthesis; CoA from (R)-pantothenate: step 4/5. Reversibly transfers an adenylyl group from ATP to 4'-phosphopantetheine, yielding dephospho-CoA (dPCoA) and pyrophosphate. The sequence is that of Phosphopantetheine adenylyltransferase from Allorhizobium ampelinum (strain ATCC BAA-846 / DSM 112012 / S4) (Agrobacterium vitis (strain S4)).